The following is a 718-amino-acid chain: Cyclomaltodextrin glucanotransferase (718 aa).

Positions 1 to 34 are cleaved as a signal peptide; the sequence is MFQMAKRAFLSTTLTLGLLAGSALPFLPASAVYA. The interval 35-172 is A1; that stretch reads DPDTAVTNKQ…GIKIVIDFAP (138 aa). Positions 61, 63, 66, and 67 each coordinate Ca(2+). Cysteine 77 and cysteine 84 are disulfide-bonded. Glycine 85 and aspartate 87 together coordinate Ca(2+). 134–135 lines the substrate pocket; the sequence is YW. Asparagine 173 contacts Ca(2+). Positions 173-236 are b; that stretch reads NHTSPAMETD…NLYDLADFNH (64 aa). Residue histidine 174 participates in substrate binding. Position 224 (isoleucine 224) interacts with Ca(2+). Residues 227–230 and aspartate 230 contribute to the substrate site; that span reads NLYD. Aspartate 233 provides a ligand contact to Ca(2+). Positions 237 to 440 are A2; that stretch reads NNATIDKYFK…LRKSNPAIAY (204 aa). Arginine 261 serves as a coordination point for substrate. Aspartate 263 functions as the Nucleophile in the catalytic mechanism. Substrate is bound by residues 266 to 267 and histidine 267; that span reads KH. Histidine 267 is a Ca(2+) binding site. The active-site Proton donor is glutamate 291. The substrate site is built by histidine 361, aspartate 405, and arginine 409. A c region spans residues 441–528; the sequence is GSTQQRWINN…ATAVWQYTTA (88 aa). Residues 529–614 form a d region; the sequence is ETTPTIGHVG…SNAYNNFTIL (86 aa). An IPT/TIG domain is found at 532–612; sequence PTIGHVGPVM…VNSNAYNNFT (81 aa). The region spanning 613–718 is the CBM20 domain; it reads ILTGDQVTVR…GTATVTVNWQ (106 aa). Residues 615 to 718 are e; that stretch reads TGDQVTVRFV…GTATVTVNWQ (104 aa).

It belongs to the glycosyl hydrolase 13 family. In terms of assembly, monomer. Ca(2+) serves as cofactor.

It is found in the secreted. It catalyses the reaction Cyclizes part of a (1-&gt;4)-alpha-D-glucan chain by formation of a (1-&gt;4)-alpha-D-glucosidic bond.. This chain is Cyclomaltodextrin glucanotransferase, found in Niallia circulans (Bacillus circulans).